Reading from the N-terminus, the 300-residue chain is N-acetylmuramic acid 6-phosphate etherase (300 aa).

An SIS domain is found at 55 to 217; that stretch reads IAERLRAGGR…STGAMIRLGK (163 aa). Glu83 functions as the Proton donor in the catalytic mechanism. Glu114 is a catalytic residue.

This sequence belongs to the GCKR-like family. MurNAc-6-P etherase subfamily. In terms of assembly, homodimer.

The catalysed reaction is N-acetyl-D-muramate 6-phosphate + H2O = N-acetyl-D-glucosamine 6-phosphate + (R)-lactate. It functions in the pathway amino-sugar metabolism; N-acetylmuramate degradation. Specifically catalyzes the cleavage of the D-lactyl ether substituent of MurNAc 6-phosphate, producing GlcNAc 6-phosphate and D-lactate. The sequence is that of N-acetylmuramic acid 6-phosphate etherase from Symbiobacterium thermophilum (strain DSM 24528 / JCM 14929 / IAM 14863 / T).